The primary structure comprises 327 residues: tRNA-dihydrouridine(20/20a) synthase (327 aa).

FMN-binding positions include 17-19 (PML) and Q69. C99 acts as the Proton donor in catalysis. FMN contacts are provided by residues K138, H170, 210 to 212 (NGG), and 232 to 233 (GR).

This sequence belongs to the Dus family. DusA subfamily. Requires FMN as cofactor.

It catalyses the reaction 5,6-dihydrouridine(20) in tRNA + NADP(+) = uridine(20) in tRNA + NADPH + H(+). The catalysed reaction is 5,6-dihydrouridine(20) in tRNA + NAD(+) = uridine(20) in tRNA + NADH + H(+). The enzyme catalyses 5,6-dihydrouridine(20a) in tRNA + NADP(+) = uridine(20a) in tRNA + NADPH + H(+). It carries out the reaction 5,6-dihydrouridine(20a) in tRNA + NAD(+) = uridine(20a) in tRNA + NADH + H(+). In terms of biological role, catalyzes the synthesis of 5,6-dihydrouridine (D), a modified base found in the D-loop of most tRNAs, via the reduction of the C5-C6 double bond in target uridines. Specifically modifies U20 and U20a in tRNAs. The polypeptide is tRNA-dihydrouridine(20/20a) synthase (Pasteurella multocida (strain Pm70)).